Consider the following 490-residue polypeptide: MADAVTPRDEDYSQWYQDVVRNGQLAENSPARGCMIIKPNGMALWENMRDQLDQMFKDTGHQNYYFPLFIPERYMEREAEHVEGFAKECAVVTHSRLTQDEEGDLVPDPESELGENYIVRPTSETIIWDTYSKWIQSYRDLPLLYNQWANVVRWEMRPRLFLRTAEFLWQEGHTAHATETEAVEEAERMLDVYTTFAEEYMAMPVLQGRKTESERFPGAVDTYCIEAMMQDGKALQAGTSHFLGQNFAKAFDCTFTNEDNEEEYVWATSWGVSTRLIGGLIMTHSDDQGLVLPPKLAPHQVVIVPLFFDDDQEGPVMETCERLQERLEDHGIRVKMDQNHTQSPGWRFSEHELRGVPLRLAIGPRDLENDNVEMARRDTQEKEVVPQDGIAERVSDTLDDIQHALHERAQDRQADNTRVVEDYDAFREVIGRGGFAWAHWDGTPETEARIQEETSATIRLIPFDREDHEEGEDMLTGEPSEGRVLFAQAY.

It belongs to the class-II aminoacyl-tRNA synthetase family. ProS type 3 subfamily. As to quaternary structure, homodimer.

Its subcellular location is the cytoplasm. It catalyses the reaction tRNA(Pro) + L-proline + ATP = L-prolyl-tRNA(Pro) + AMP + diphosphate. Functionally, catalyzes the attachment of proline to tRNA(Pro) in a two-step reaction: proline is first activated by ATP to form Pro-AMP and then transferred to the acceptor end of tRNA(Pro). This is Proline--tRNA ligase from Salinibacter ruber (strain DSM 13855 / M31).